A 251-amino-acid chain; its full sequence is Flap endonuclease Xni (251 aa).

D104 is a binding site for Mg(2+). Residues 160–249 form the 5'-3' exonuclease domain; the sequence is VLPRQLPDYW…IDGNLQQLRL (90 aa). L171, A172, P180, V182, and I185 together coordinate K(+). Positions 184–189 are interaction with DNA; that stretch reads GIGPKS.

This sequence belongs to the Xni family. The cofactor is Mg(2+). Requires K(+) as cofactor.

In terms of biological role, has flap endonuclease activity. During DNA replication, flap endonucleases cleave the 5'-overhanging flap structure that is generated by displacement synthesis when DNA polymerase encounters the 5'-end of a downstream Okazaki fragment. This is Flap endonuclease Xni from Salmonella typhimurium (strain LT2 / SGSC1412 / ATCC 700720).